We begin with the raw amino-acid sequence, 293 residues long: TBC1 domain family member 7 (293 aa).

The 182-residue stretch at 50–231 (PLPSMYRALV…RVWDKVVSGS (182 aa)) folds into the Rab-GAP TBC domain.

Component of the TSC-TBC complex (also named Rhebulator complex), composed of 2 molecules of TSC1, 2 molecules of TSC2 and 1 molecule of TBC1D7. Interacts with TSC1 (via C-terminal half of the coiled-coil domain). As to expression, highly expressed in heart, and slightly in kidney, liver and placenta.

The protein localises to the lysosome membrane. It localises to the cytoplasmic vesicle. It is found in the cytoplasm. The protein resides in the cytosol. In terms of biological role, non-catalytic component of the TSC-TBC complex, a multiprotein complex that acts as a negative regulator of the canonical mTORC1 complex, an evolutionarily conserved central nutrient sensor that stimulates anabolic reactions and macromolecule biosynthesis to promote cellular biomass generation and growth. The TSC-TBC complex acts as a GTPase-activating protein (GAP) for the small GTPase RHEB, a direct activator of the protein kinase activity of mTORC1. In absence of nutrients, the TSC-TBC complex inhibits mTORC1, thereby preventing phosphorylation of ribosomal protein S6 kinase (RPS6KB1 and RPS6KB2) and EIF4EBP1 (4E-BP1) by the mTORC1 signaling. The TSC-TBC complex is inactivated in response to nutrients, relieving inhibition of mTORC1. The polypeptide is TBC1 domain family member 7 (Homo sapiens (Human)).